A 91-amino-acid chain; its full sequence is Small ribosomal subunit protein uS15 (91 aa).

The protein belongs to the universal ribosomal protein uS15 family. In terms of assembly, part of the 30S ribosomal subunit. Forms a bridge to the 50S subunit in the 70S ribosome, contacting the 23S rRNA.

In terms of biological role, one of the primary rRNA binding proteins, it binds directly to 16S rRNA where it helps nucleate assembly of the platform of the 30S subunit by binding and bridging several RNA helices of the 16S rRNA. Its function is as follows. Forms an intersubunit bridge (bridge B4) with the 23S rRNA of the 50S subunit in the ribosome. In Rickettsia canadensis (strain McKiel), this protein is Small ribosomal subunit protein uS15.